Reading from the N-terminus, the 146-residue chain is Large ribosomal subunit protein bL9 (146 aa).

This sequence belongs to the bacterial ribosomal protein bL9 family.

Binds to the 23S rRNA. The protein is Large ribosomal subunit protein bL9 of Deinococcus deserti (strain DSM 17065 / CIP 109153 / LMG 22923 / VCD115).